Here is a 480-residue protein sequence, read N- to C-terminus: Glycogen synthase (480 aa).

Lys15 lines the ADP-alpha-D-glucose pocket.

Belongs to the glycosyltransferase 1 family. Bacterial/plant glycogen synthase subfamily.

It catalyses the reaction [(1-&gt;4)-alpha-D-glucosyl](n) + ADP-alpha-D-glucose = [(1-&gt;4)-alpha-D-glucosyl](n+1) + ADP + H(+). It participates in glycan biosynthesis; glycogen biosynthesis. In terms of biological role, synthesizes alpha-1,4-glucan chains using ADP-glucose. In Rhizobium leguminosarum bv. trifolii (strain WSM2304), this protein is Glycogen synthase.